A 261-amino-acid chain; its full sequence is Transcription factor BEE 3 (261 aa).

Positions 72-82 (NIQNNEESSSQ) are enriched in low complexity. Disordered regions lie at residues 72 to 158 (NIQN…TDSH) and 242 to 261 (VEMG…SWTL). Residues 95 to 123 (VSTSENSVSDQTLSTSSAQVSINGNISTK) show a composition bias toward polar residues. Positions 135-146 (NREEEKEREVVH) are enriched in basic and acidic residues. The bHLH domain maps to 153-203 (QATDSHSIAERVRRGKINERLKCLQDIVPGCYKTMGMATMLDEIINYVQSL).

Homodimer. Expressed in stems.

The protein localises to the nucleus. Positive regulator of brassinosteroid signaling. The chain is Transcription factor BEE 3 (BEE3) from Arabidopsis thaliana (Mouse-ear cress).